Reading from the N-terminus, the 345-residue chain is Biotin synthase (345 aa).

The 226-residue stretch at 66-291 (PEVEIEGIIS…RTILRFAGGR (226 aa)) folds into the Radical SAM core domain. Cys-81, Cys-85, and Cys-88 together coordinate [4Fe-4S] cluster. Positions 124, 157, 216, and 286 each coordinate [2Fe-2S] cluster.

Belongs to the radical SAM superfamily. Biotin synthase family. In terms of assembly, homodimer. [4Fe-4S] cluster is required as a cofactor. [2Fe-2S] cluster serves as cofactor.

The enzyme catalyses (4R,5S)-dethiobiotin + (sulfur carrier)-SH + 2 reduced [2Fe-2S]-[ferredoxin] + 2 S-adenosyl-L-methionine = (sulfur carrier)-H + biotin + 2 5'-deoxyadenosine + 2 L-methionine + 2 oxidized [2Fe-2S]-[ferredoxin]. Its pathway is cofactor biosynthesis; biotin biosynthesis; biotin from 7,8-diaminononanoate: step 2/2. Catalyzes the conversion of dethiobiotin (DTB) to biotin by the insertion of a sulfur atom into dethiobiotin via a radical-based mechanism. The sequence is that of Biotin synthase from Mycobacterium leprae (strain Br4923).